The chain runs to 151 residues: Globin CTT-VIII (151 aa).

The Globin domain occupies 4–148 (PMSADQLALF…MFFYILHALE (145 aa)). Heme b is bound by residues His62 and His97.

The protein belongs to the globin family. In terms of assembly, homodimer.

This is Globin CTT-VIII (CTT-8) from Chironomus thummi thummi (Midge).